The following is a 287-amino-acid chain: Glutamate racemase (287 aa).

Residues 32–33 and 64–65 each bind substrate; these read DS and YG. Catalysis depends on Cys96, which acts as the Proton donor/acceptor. 97–98 provides a ligand contact to substrate; sequence NT. Cys208 serves as the catalytic Proton donor/acceptor. 209 to 210 contributes to the substrate binding site; that stretch reads TH.

Belongs to the aspartate/glutamate racemases family.

It carries out the reaction L-glutamate = D-glutamate. Its pathway is cell wall biogenesis; peptidoglycan biosynthesis. Its function is as follows. Provides the (R)-glutamate required for cell wall biosynthesis. In Serratia proteamaculans (strain 568), this protein is Glutamate racemase.